We begin with the raw amino-acid sequence, 360 residues long: Nicotinate-nucleotide--dimethylbenzimidazole phosphoribosyltransferase (360 aa).

The active-site Proton acceptor is the E327.

This sequence belongs to the CobT family.

The enzyme catalyses 5,6-dimethylbenzimidazole + nicotinate beta-D-ribonucleotide = alpha-ribazole 5'-phosphate + nicotinate + H(+). It functions in the pathway nucleoside biosynthesis; alpha-ribazole biosynthesis; alpha-ribazole from 5,6-dimethylbenzimidazole: step 1/2. Functionally, catalyzes the synthesis of alpha-ribazole-5'-phosphate from nicotinate mononucleotide (NAMN) and 5,6-dimethylbenzimidazole (DMB). The polypeptide is Nicotinate-nucleotide--dimethylbenzimidazole phosphoribosyltransferase (Shewanella baltica (strain OS155 / ATCC BAA-1091)).